Consider the following 367-residue polypeptide: Peptide chain release factor 2 (367 aa).

The residue at position 254 (Gln-254) is an N5-methylglutamine.

It belongs to the prokaryotic/mitochondrial release factor family. In terms of processing, methylated by PrmC. Methylation increases the termination efficiency of RF2.

It is found in the cytoplasm. Peptide chain release factor 2 directs the termination of translation in response to the peptide chain termination codons UGA and UAA. This is Peptide chain release factor 2 from Bordetella bronchiseptica (strain ATCC BAA-588 / NCTC 13252 / RB50) (Alcaligenes bronchisepticus).